Here is a 435-residue protein sequence, read N- to C-terminus: Tryptophan--tRNA ligase (435 aa).

ATP contacts are provided by residues 10 to 12 (TTS) and 18 to 19 (GN). The 'HIGH' region signature appears at 11 to 19 (TSGTPHLGN). Aspartate 143 contacts L-tryptophan. Residues 155-157 (GRD), leucine 195, and 202-206 (KMSKS) each bind ATP. Positions 202–206 (KMSKS) match the 'KMSKS' region motif.

The protein belongs to the class-I aminoacyl-tRNA synthetase family. In terms of assembly, homodimer.

The protein localises to the cytoplasm. It catalyses the reaction tRNA(Trp) + L-tryptophan + ATP = L-tryptophyl-tRNA(Trp) + AMP + diphosphate + H(+). Functionally, catalyzes the attachment of tryptophan to tRNA(Trp). The protein is Tryptophan--tRNA ligase of Xylella fastidiosa (strain Temecula1 / ATCC 700964).